We begin with the raw amino-acid sequence, 912 residues long: Protein translocase subunit SecA (912 aa).

ATP is bound by residues Gln87, 105-109, and Asp510; that span reads GEGKT. Residues 854–912 are disordered; it reads KLRHEQASAAQAEGEGDDGQQGQQATPETFVRQERKVGRNEPCPCGSGKKYKQCCGKVS. Zn(2+)-binding residues include Cys896, Cys898, Cys907, and Cys908.

Belongs to the SecA family. As to quaternary structure, monomer and homodimer. Part of the essential Sec protein translocation apparatus which comprises SecA, SecYEG and auxiliary proteins SecDF-YajC and YidC. Zn(2+) serves as cofactor.

The protein resides in the cell inner membrane. It localises to the cytoplasm. The catalysed reaction is ATP + H2O + cellular proteinSide 1 = ADP + phosphate + cellular proteinSide 2.. Its function is as follows. Part of the Sec protein translocase complex. Interacts with the SecYEG preprotein conducting channel. Has a central role in coupling the hydrolysis of ATP to the transfer of proteins into and across the cell membrane, serving both as a receptor for the preprotein-SecB complex and as an ATP-driven molecular motor driving the stepwise translocation of polypeptide chains across the membrane. The polypeptide is Protein translocase subunit SecA (Marinobacter nauticus (strain ATCC 700491 / DSM 11845 / VT8) (Marinobacter aquaeolei)).